The following is a 371-amino-acid chain: Leu/Ile/Val-binding protein homolog 1 (371 aa).

An N-terminal signal peptide occupies residues 1–23 (MRKTLFSGVALAAVIAFGGSAWA).

Belongs to the leucine-binding protein family.

In terms of biological role, component of an amino-acid transport system. In Brucella melitensis biotype 1 (strain ATCC 23456 / CCUG 17765 / NCTC 10094 / 16M), this protein is Leu/Ile/Val-binding protein homolog 1.